The following is a 406-amino-acid chain: Tyrosine--tRNA ligase (406 aa).

Tyrosine 34 contacts L-tyrosine. The short motif at 39 to 48 (PTADSLHVGH) is the 'HIGH' region element. 2 residues coordinate L-tyrosine: tyrosine 167 and glutamine 171. Positions 227–231 (KMGKT) match the 'KMSKS' region motif. An ATP-binding site is contributed by lysine 230. The region spanning 339 to 404 (RKIVDVLFEA…GKKEYHRLLV (66 aa)) is the S4 RNA-binding domain.

This sequence belongs to the class-I aminoacyl-tRNA synthetase family. TyrS type 1 subfamily. Homodimer.

The protein localises to the cytoplasm. It carries out the reaction tRNA(Tyr) + L-tyrosine + ATP = L-tyrosyl-tRNA(Tyr) + AMP + diphosphate + H(+). Catalyzes the attachment of tyrosine to tRNA(Tyr) in a two-step reaction: tyrosine is first activated by ATP to form Tyr-AMP and then transferred to the acceptor end of tRNA(Tyr). The protein is Tyrosine--tRNA ligase of Caldanaerobacter subterraneus subsp. tengcongensis (strain DSM 15242 / JCM 11007 / NBRC 100824 / MB4) (Thermoanaerobacter tengcongensis).